Here is a 78-residue protein sequence, read N- to C-terminus: Probable [Fe-S]-dependent transcriptional repressor (78 aa).

4 residues coordinate iron-sulfur cluster: Cys-56, Cys-61, Cys-64, and Cys-70.

This sequence belongs to the FeoC family.

Its function is as follows. May function as a transcriptional regulator that controls feoABC expression. This is Probable [Fe-S]-dependent transcriptional repressor from Escherichia fergusonii (strain ATCC 35469 / DSM 13698 / CCUG 18766 / IAM 14443 / JCM 21226 / LMG 7866 / NBRC 102419 / NCTC 12128 / CDC 0568-73).